The primary structure comprises 363 residues: Exopolygalacturonase rpg13 (363 aa).

An N-terminal signal peptide occupies residues 1 to 26 (MVKFLSLTSSVTALLLLSLGANGVAA). N-linked (GlcNAc...) asparagine glycosylation is found at N121, N142, and N150. PbH1 repeat units follow at residues 143-173 (ATDV…DVSR), 174-195 (SSNV…AINE), 197-217 (VTNV…SVGS), 227-248 (VKTV…RIKT), and 256-277 (VSDI…LITT). The active-site Proton donor is the D188. C190 and C207 form a disulfide bridge. Residue N199 is glycosylated (N-linked (GlcNAc...) asparagine). H211 is an active-site residue. The N-linked (GlcNAc...) asparagine glycan is linked to N321. A disulfide bond links C322 and C328. The PbH1 6 repeat unit spans residues 328-354 (CTDFTLSGVKITKASNTPKNVCVNLDG).

This sequence belongs to the glycosyl hydrolase 28 family. Post-translationally, N-glycosylated.

It localises to the secreted. The enzyme catalyses [(1-&gt;4)-alpha-D-galacturonosyl](n) + H2O = alpha-D-galacturonate + [(1-&gt;4)-alpha-D-galacturonosyl](n-1). Specific in hydrolyzing the terminal glycosidic bond of polygalacturonic acid and oligogalacturonates. Has no activity towards trigalacturonic acid. The polypeptide is Exopolygalacturonase rpg13 (Rhizopus delemar (strain RA 99-880 / ATCC MYA-4621 / FGSC 9543 / NRRL 43880) (Mucormycosis agent)).